We begin with the raw amino-acid sequence, 597 residues long: Alpha-1,2-mannosyltransferase MNN2 (597 aa).

Residues 1–6 are Cytoplasmic-facing; it reads MIAKQK. A helical membrane pass occupies residues 7 to 27; sequence IKILIGVIIVIATYHFIVSSN. At 28-597 the chain is on the extracellular side; that stretch reads VRSKDLSDLV…ETAEIPTVVS (570 aa). Residues 39-89 form a disordered region; it reads LGSSDKSTTENERPKNNIVTNNRLDNPPNEDIPHAEPDSPPQEPPKSGNKP. N382 carries N-linked (GlcNAc...) asparagine glycosylation.

This sequence belongs to the MNN1/MNT family. It depends on Mn(2+) as a cofactor.

The protein resides in the golgi apparatus membrane. It participates in protein modification; protein glycosylation. Its activity is regulated as follows. Enzyme activity is regulated by iron. Alpha-1,2-mannosyltransferase required for cell wall integrity. Responsible for addition of the first alpha-1,2-linked mannose to form the branches on the mannan backbone of oligosaccharides. Addition of alpha-1,2-mannose is required for stabilization of the alpha-1,6-mannose backbone and hence regulates mannan fibril length; and is important for both immune recognition and virulence. Promotes iron uptake and usage along the endocytosis pathway under iron-limiting conditions. The protein is Alpha-1,2-mannosyltransferase MNN2 (MNN2) of Candida albicans (strain SC5314 / ATCC MYA-2876) (Yeast).